An 851-amino-acid chain; its full sequence is Protein BCK2 (851 aa).

Positions 1-10 are enriched in basic residues; the sequence is MPKNSHHHRS. 5 disordered regions span residues 1–91, 233–271, 315–355, 466–504, and 698–722; these read MPKN…RKKS, EVVP…MNTK, SLSL…LPEE, FLDG…YITT, and HASR…PNNV. Over residues 11-23 the composition is skewed to low complexity; it reads SSVNSTKSRSTES. Residues 37-66 show a composition bias toward polar residues; it reads ASGSTQASPDRNSSTGSCSTPVLPTMNVMS. Residues 71–81 are compositionally biased toward basic and acidic residues; sequence VLLEDPRDNHT. 4 stretches are compositionally biased toward polar residues: residues 254 to 271, 334 to 349, 489 to 504, and 702 to 722; these read SETN…MNTK, SPRT…SQSK, ISDA…YITT, and SESN…PNNV. The residue at position 334 (serine 334) is a Phosphoserine. A phosphoserine mark is found at serine 757 and serine 761.

Dosage dependent suppressor of PKC1 deletion and MPK1 deletion. Involved in cell lysis. This Saccharomyces cerevisiae (strain ATCC 204508 / S288c) (Baker's yeast) protein is Protein BCK2 (BCK2).